The chain runs to 1299 residues: MSSEATFGSMQIGLATASDIRDWSFGEVKKPETINYRTLKPEKDGLFCEKIFGPSRDWECYCGKYKRVRFKGIICERCGVEVTRAKVRRERMGHIELAAPVTHIWYFKGVPSRLGYLLDLAPKDLEKVIYFAAYMITSVDDEMRHADLPNLQAEHDLEKKQLVDTRDSDIAGIARDLEGELTKLEGEGAKAADKKKARDSADRQMANIRKRADADIDRLDQVWDRFKGLKVTDLEGDEGLYRELRDRYGLYFEGSMGAEAIKKRLENFDMAAESESLRDTIQNGKGQRKTRALKRLKVVNAFLTTKNSPLGMVLDAVPVIPPELRPMVQLDGGRFATSDLNDLYRRVINRNNRLKRLLDLGAPEIIVNNEKRMLQEAVDSLFDNGRRGRPVTGPGNRPLKSLSDMLKGKQGRFRQNLLGKRVDYSGRSVIVVGPQLKLHQCGLPKQMALELFKPFVMKRLVDLNHAQNIKSAKRMVERYRPQVWDVLEEIITEHPVLLNRAPTLHRLGIQAFEPMLVEGKAIQLHPLVCGAFNADFDGDQMAVHLPLSPEAQAEARVLMLSSNNILKPSDGRPVTLPSQDMIIGLYHLTTKRVGSAGEGRIFTSPSEAIMAHDAGVLHLNSTVKIRLDNFVPGEDWEAPAGWEAGQPAIVETSLGQVLFNDTLPADYPWVEKVADKGQLSEIVNDLAERYPKVVVAATLDNLKDAGFYWATRSGVTVAISDIEVPAEKPAILAGYEVKAAKVQSQFEKGLIADDERRQELIDIWNQATNDVADAMRKSLSASNTINRMVSSGARGNWMQVRQIAGIRGLVANPKGEIIPRPIKSSYREGLSVLEYFIATHGARKGLADTALRTANSGYLTRRLVDVSQDVIVREDDCGTEYGLTLPIAVADSNGELVMHEEVENSVYARTLATEVTDAKGKVLAAAGADVGDVLIAELFAAGVTEVKVRSVLTCESAVGTCAQCYGRSLATGKLVDIGEAVGIIAAQSIGEPGTQLTMRTFHTGGAVSASRGEDITQGLPRIQELFEARTPKGVAPIAEAAGRVNIEETERQMRLVLTPDDGTEEIAYPILRRARLLVADGDRVEVGQKLVVGAVDPKQVLRVLGPRAAQKHLVEEVQRVYRSQGVGIHDKHVEVIVRQMLRRVTVIESGDSNLLPGELAERGRFETENRRVVSEGQKPASGRNELMGITKASLATESWLSAASFQETTRVLTQAAMEGKSDPLLGLKENVIIGKLIPAGTGLPRYTDITVEPTEEAKANLFTAPSAFSDFDYAGVGGDLAPEFQAIPLDDYDLGSEYR.

4 residues coordinate Zn(2+): C60, C62, C75, and C78. The Mg(2+) site is built by D535, D537, and D539. Zn(2+) is bound by residues C877, C954, C961, and C964.

The protein belongs to the RNA polymerase beta' chain family. In terms of assembly, the RNAP catalytic core consists of 2 alpha, 1 beta, 1 beta' and 1 omega subunit. When a sigma factor is associated with the core the holoenzyme is formed, which can initiate transcription. Mg(2+) is required as a cofactor. Zn(2+) serves as cofactor.

It catalyses the reaction RNA(n) + a ribonucleoside 5'-triphosphate = RNA(n+1) + diphosphate. Functionally, DNA-dependent RNA polymerase catalyzes the transcription of DNA into RNA using the four ribonucleoside triphosphates as substrates. The sequence is that of DNA-directed RNA polymerase subunit beta' from Renibacterium salmoninarum (strain ATCC 33209 / DSM 20767 / JCM 11484 / NBRC 15589 / NCIMB 2235).